Reading from the N-terminus, the 238-residue chain is Ubiquinone biosynthesis O-methyltransferase (238 aa).

S-adenosyl-L-methionine contacts are provided by Arg-40, Gly-59, Asp-81, and Met-126.

Belongs to the methyltransferase superfamily. UbiG/COQ3 family.

The catalysed reaction is a 3-demethylubiquinol + S-adenosyl-L-methionine = a ubiquinol + S-adenosyl-L-homocysteine + H(+). It carries out the reaction a 3-(all-trans-polyprenyl)benzene-1,2-diol + S-adenosyl-L-methionine = a 2-methoxy-6-(all-trans-polyprenyl)phenol + S-adenosyl-L-homocysteine + H(+). It functions in the pathway cofactor biosynthesis; ubiquinone biosynthesis. O-methyltransferase that catalyzes the 2 O-methylation steps in the ubiquinone biosynthetic pathway. This Neisseria meningitidis serogroup C (strain 053442) protein is Ubiquinone biosynthesis O-methyltransferase.